Here is a 258-residue protein sequence, read N- to C-terminus: Octanoyltransferase (258 aa).

The region spanning 42–226 (NLGADTLLLL…AVVAALDGAL (185 aa)) is the BPL/LPL catalytic domain. Residues 80–87 (RGGKITWH), 156–158 (AIG), and 169–171 (GFS) each bind substrate. Cys-187 functions as the Acyl-thioester intermediate in the catalytic mechanism.

This sequence belongs to the LipB family.

Its subcellular location is the cytoplasm. It carries out the reaction octanoyl-[ACP] + L-lysyl-[protein] = N(6)-octanoyl-L-lysyl-[protein] + holo-[ACP] + H(+). It participates in protein modification; protein lipoylation via endogenous pathway; protein N(6)-(lipoyl)lysine from octanoyl-[acyl-carrier-protein]: step 1/2. In terms of biological role, catalyzes the transfer of endogenously produced octanoic acid from octanoyl-acyl-carrier-protein onto the lipoyl domains of lipoate-dependent enzymes. Lipoyl-ACP can also act as a substrate although octanoyl-ACP is likely to be the physiological substrate. This is Octanoyltransferase from Rhodococcus opacus (strain B4).